The sequence spans 296 residues: Prostate androgen-regulated mucin-like protein 1 homolog (296 aa).

Positions 1-20 (MVCKALITLCIFAAGLRVQG) are cleaved as a signal peptide. At 21–244 (SPTPTLLPVS…EVENALSSGS (224 aa)) the chain is on the extracellular side. Asn-62, Asn-96, and Asn-108 each carry an N-linked (GlcNAc...) asparagine glycan. Residues 73 to 220 (LTSQLPTHPR…SPQDTEPGKV (148 aa)) form a disordered region. The segment covering 80–96 (HPREEAVTSPPLKREVN) has biased composition (basic and acidic residues). The segment covering 97-111 (STDSSPTGFSSNSSG) has biased composition (low complexity). A compositionally biased stretch (polar residues) spans 125–145 (SPETSVPATGSQSPTLLFSQG). 2 stretches are compositionally biased toward low complexity: residues 146–175 (PTSA…TVNN) and 195–205 (SHTPTSHVTEP). Asn-168 carries N-linked (GlcNAc...) asparagine glycosylation. The span at 206 to 217 (VPKEKSPQDTEP) shows a compositional bias: basic and acidic residues. The helical transmembrane segment at 245–265 (IAAITVTVIAVVLLVFGAAAY) threads the bilayer. Over 266 to 296 (LKIRHSSYGRLLDDHDYGSWGNYNNPLYDDS) the chain is Cytoplasmic. A Phosphoserine modification is found at Ser-284.

This sequence belongs to the PARM family. In terms of processing, highly N-glycosylated and O-glycosylated. In terms of tissue distribution, expressed in prostate. Detected in other organs at low levels, these include the heart and various tissues of the urogenital tract. Not detected in mammary gland.

The protein resides in the cell membrane. The protein localises to the golgi apparatus membrane. It is found in the endosome membrane. In terms of biological role, may regulate TLP1 expression and telomerase activity, thus enabling certain prostatic cells to resist apoptosis. The protein is Prostate androgen-regulated mucin-like protein 1 homolog (Parm1) of Rattus norvegicus (Rat).